Consider the following 206-residue polypeptide: Ribonuclease HII (206 aa).

The region spanning Ala-14–Pro-206 is the RNase H type-2 domain. Residues Asp-20, Glu-21, and Asp-117 each coordinate a divalent metal cation.

It belongs to the RNase HII family. It depends on Mn(2+) as a cofactor. The cofactor is Mg(2+).

It localises to the cytoplasm. It catalyses the reaction Endonucleolytic cleavage to 5'-phosphomonoester.. Functionally, endonuclease that specifically degrades the RNA of RNA-DNA hybrids. The sequence is that of Ribonuclease HII from Pelodictyon phaeoclathratiforme (strain DSM 5477 / BU-1).